A 492-amino-acid polypeptide reads, in one-letter code: Probable small intestine urate exporter (492 aa).

A disordered region spans residues 1–20; the sequence is MSTGADLKAREGDIPSDNMT. N-linked (GlcNAc...) asparagine glycans are attached at residues N18, N44, N53, N63, N72, and N87. The next 11 helical transmembrane spans lie at 112-132, 134-154, 156-176, 198-218, 225-245, 287-307, 327-347, 363-383, 393-413, 426-446, and 456-476; these read LSYG…VFGA, YVVG…PLAA, AGVA…VMVL, IAAS…GLIC, YIFY…FPLV, LPLW…STVM, ILSA…GLLA, KLFT…LPWV, FLVL…INFL, LLQV…GFFI, and NVFF…LIFS.

The protein belongs to the major facilitator superfamily. Sodium/anion cotransporter family. Expressed in the small intestine (at protein level).

The protein localises to the apical cell membrane. It catalyses the reaction 3 Na(+)(out) + phosphate(out) = 3 Na(+)(in) + phosphate(in). The enzyme catalyses urate(out) + n chloride(in) = urate(in) + n chloride(out). It carries out the reaction L-thyroxine(out) = L-thyroxine(in). The catalysed reaction is 3,3',5-triiodo-L-thyronine(out) = 3,3',5-triiodo-L-thyronine(in). Functionally, acts as a membrane potential-dependent organic anion transporter, the transport requires a low concentration of chloride ions. Mediates chloride-dependent transport of urate. Mediates sodium-independent high affinity transport of thyroid hormones including L-thyroxine (T4) and 3,3',5-triiodo-L-thyronine (T3). Can actively transport inorganic phosphate into cells via Na(+) cotransport. The chain is Probable small intestine urate exporter (Slc17a4) from Mus musculus (Mouse).